Consider the following 125-residue polypeptide: Large ribosomal subunit protein bL12 (125 aa).

The protein belongs to the bacterial ribosomal protein bL12 family. Homodimer. Part of the ribosomal stalk of the 50S ribosomal subunit. Forms a multimeric L10(L12)X complex, where L10 forms an elongated spine to which 2 to 4 L12 dimers bind in a sequential fashion. Binds GTP-bound translation factors.

Forms part of the ribosomal stalk which helps the ribosome interact with GTP-bound translation factors. Is thus essential for accurate translation. This Campylobacter concisus (strain 13826) protein is Large ribosomal subunit protein bL12.